A 283-amino-acid polypeptide reads, in one-letter code: D-alanine aminotransferase (283 aa).

Tyr-31 provides a ligand contact to substrate. Arg-50 provides a ligand contact to pyridoxal 5'-phosphate. Residues Arg-98 and His-100 each contribute to the substrate site. Lys-144 acts as the Proton acceptor in catalysis. Position 144 is an N6-(pyridoxal phosphate)lysine (Lys-144). Glu-176 is a binding site for pyridoxal 5'-phosphate.

The protein belongs to the class-IV pyridoxal-phosphate-dependent aminotransferase family. As to quaternary structure, homodimer. Pyridoxal 5'-phosphate is required as a cofactor.

It carries out the reaction D-alanine + 2-oxoglutarate = D-glutamate + pyruvate. Acts on the D-isomers of alanine, leucine, aspartate, glutamate, aminobutyrate, norvaline and asparagine. The enzyme transfers an amino group from a substrate D-amino acid to the pyridoxal phosphate cofactor to form pyridoxamine and an alpha-keto acid in the first half-reaction. The second half-reaction is the reverse of the first, transferring the amino group from the pyridoxamine to a second alpha-keto acid to form the product D-amino acid via a ping-pong mechanism. This is an important process in the formation of D-alanine and D-glutamate, which are essential bacterial cell wall components. This chain is D-alanine aminotransferase (dat), found in Bacillus licheniformis.